The chain runs to 212 residues: MSARIVVTGTDTGIGKTVFAAALAGALDATYWKPVQSGLEDETDSGAVQRLSGLAADRILPERYRLRTPASPHLAAEIDGVDIDVAALELPSVSRPLVVEGAGGLMVPLTRETTYIDVFARWAAPLVLCARTSLGTINHTLLSIEAIRARDIPLLGVAFLGDENLDSEQIIVELGHTRRLGRLPRLERLDAAALRAAFAAAFEPRDFLGDAP.

13 to 18 serves as a coordination point for ATP; the sequence is GIGKTV. T17 serves as a coordination point for Mg(2+). K33 is a catalytic residue. Residue S37 participates in substrate binding. Position 100 (E100) interacts with Mg(2+). Residues 100–103 and 184–186 each bind ATP; these read EGAG and PRL.

The protein belongs to the dethiobiotin synthetase family. Homodimer. Mg(2+) is required as a cofactor.

It localises to the cytoplasm. It carries out the reaction (7R,8S)-7,8-diammoniononanoate + CO2 + ATP = (4R,5S)-dethiobiotin + ADP + phosphate + 3 H(+). It participates in cofactor biosynthesis; biotin biosynthesis; biotin from 7,8-diaminononanoate: step 1/2. Functionally, catalyzes a mechanistically unusual reaction, the ATP-dependent insertion of CO2 between the N7 and N8 nitrogen atoms of 7,8-diaminopelargonic acid (DAPA, also called 7,8-diammoniononanoate) to form a ureido ring. The sequence is that of ATP-dependent dethiobiotin synthetase BioD from Rhodopseudomonas palustris (strain TIE-1).